The primary structure comprises 751 residues: Centrosomal protein of 68 kDa (751 aa).

Basic and acidic residues-rich tracts occupy residues methionine 1–lysine 17 and alanine 86–glutamate 96. The interval methionine 1 to alanine 253 is disordered. 2 stretches are compositionally biased toward polar residues: residues leucine 131 to cysteine 144 and alanine 163 to lysine 175. Positions serine 176 to serine 200 are enriched in low complexity. Residue serine 326 is modified to Phosphoserine. A compositionally biased stretch (polar residues) spans serine 339–phenylalanine 348. 3 disordered regions span residues serine 339–aspartate 474, serine 511–proline 545, and arginine 590–glutamate 611. Composition is skewed to basic and acidic residues over residues glycine 399 to lysine 416 and arginine 433 to threonine 450. A compositionally biased stretch (polar residues) spans serine 451–glutamate 461. Phosphoserine occurs at positions 466 and 472. Residues glycine 520–alanine 537 are compositionally biased toward low complexity.

In terms of assembly, interacts with CNTLN; the interaction recruits CEP68 to the centrosome. Interacts with the SCF(FBXW11) complex which contains SKP1, CUL1 and FBXW11; the interaction is probably mediated by FBXW11 and the complex also contains CDK5RAP2 and PCNT. Also interacts with F-box protein BTRC. Interacts with serine/threonine-protein kinase PLK1; the interaction leads to phosphorylation of CEP68 and its subsequent degradation. Interacts with NEK2; the interaction leads to phosphorylation of CEP68. Phosphorylation by PLK1 is required for binding to BTRC in prometaphase. Phosphorylated directly or indirectly by NEK2. NEK2-mediated phosphorylation promotes CEP68 dissociation from the centrosome and its degradation at the onset of mitosis. Post-translationally, ubiquitinated and targeted for proteasomal degradation in early mitosis by the SCF(BTRC) and/or SCF(FBXW11) E3 ubiquitin-protein ligase complexes. Degradation is complete by prometaphase and is required for removal of CDK5RAP2 from the peripheral pericentriolar material and subsequent centriole separation.

The protein localises to the cytoplasm. Its subcellular location is the cytoskeleton. It localises to the microtubule organizing center. The protein resides in the centrosome. Functionally, involved in maintenance of centrosome cohesion, probably as part of a linker structure which prevents centrosome splitting. Required for localization of CDK5RAP2 to the centrosome during interphase. Contributes to CROCC/rootletin filament formation. The polypeptide is Centrosomal protein of 68 kDa (CEP68) (Pongo abelii (Sumatran orangutan)).